The primary structure comprises 481 residues: Ankyrin repeat, SAM and basic leucine zipper domain-containing protein 1 (481 aa).

Over residues 1–10 (MASGALRGLA) the composition is skewed to low complexity. The interval 1–23 (MASGALRGLAVAGGGESSDSEDD) is disordered. 3 positions are modified to phosphoserine: S17, S18, and S20. ANK repeat units follow at residues 45–74 (EKSE…SVDS), 78–107 (YGWT…NASF), 110–144 (DKQT…DPNI), 148–177 (RLMT…EVNA), 181–210 (NGYT…NKML), and 214–243 (DGKI…PLEG). In terms of domain architecture, SAM spans 272–334 (SYTAFGDLEI…KILSALKELE (63 aa)).

Interacts with DDX4, PIWIL1, RANBP9 and TDRD1.

It is found in the cytoplasm. In terms of biological role, plays a central role during spermatogenesis by repressing transposable elements and preventing their mobilization, which is essential for the germline integrity. Acts via the piRNA metabolic process, which mediates the repression of transposable elements during meiosis by forming complexes composed of piRNAs and Piwi proteins and governs the methylation and subsequent repression of transposons. Its association with pi-bodies suggests a participation in the primary piRNAs metabolic process. Required prior to the pachytene stage to facilitate the production of multiple types of piRNAs, including those associated with repeats involved in the regulation of retrotransposons. May act by mediating protein-protein interactions during germ cell maturation. The chain is Ankyrin repeat, SAM and basic leucine zipper domain-containing protein 1 (ASZ1) from Eulemur macaco macaco (Black lemur).